Here is a 932-residue protein sequence, read N- to C-terminus: Alanine--tRNA ligase (932 aa).

Residues His623, His627, Cys726, and His730 each coordinate Zn(2+). Residues 893-916 (RVGGGGGGPPDFAQGGGPDVDSLD) are disordered. Residues 894–910 (VGGGGGGPPDFAQGGGP) are compositionally biased toward gly residues.

It belongs to the class-II aminoacyl-tRNA synthetase family. The cofactor is Zn(2+).

The protein localises to the cytoplasm. It carries out the reaction tRNA(Ala) + L-alanine + ATP = L-alanyl-tRNA(Ala) + AMP + diphosphate. Functionally, catalyzes the attachment of alanine to tRNA(Ala) in a two-step reaction: alanine is first activated by ATP to form Ala-AMP and then transferred to the acceptor end of tRNA(Ala). Also edits incorrectly charged Ser-tRNA(Ala) and Gly-tRNA(Ala) via its editing domain. The sequence is that of Alanine--tRNA ligase from Natronomonas pharaonis (strain ATCC 35678 / DSM 2160 / CIP 103997 / JCM 8858 / NBRC 14720 / NCIMB 2260 / Gabara) (Halobacterium pharaonis).